The primary structure comprises 358 residues: Uroporphyrinogen decarboxylase (358 aa).

Substrate is bound by residues 29–33 (RQAGR), Phe-48, Asp-79, Tyr-155, Ser-210, and His-330.

Belongs to the uroporphyrinogen decarboxylase family. Homodimer.

It localises to the cytoplasm. The catalysed reaction is uroporphyrinogen III + 4 H(+) = coproporphyrinogen III + 4 CO2. Its pathway is porphyrin-containing compound metabolism; protoporphyrin-IX biosynthesis; coproporphyrinogen-III from 5-aminolevulinate: step 4/4. Catalyzes the decarboxylation of four acetate groups of uroporphyrinogen-III to yield coproporphyrinogen-III. This is Uroporphyrinogen decarboxylase from Bordetella parapertussis (strain 12822 / ATCC BAA-587 / NCTC 13253).